We begin with the raw amino-acid sequence, 284 residues long: Tropomyosin alpha-1 chain (284 aa).

The disordered stretch occupies residues Met1 to Gln38. Positions Met1–Ile284 form a coiled coil. The span at Lys12–Gln38 shows a compositional bias: basic and acidic residues.

The protein belongs to the tropomyosin family. Homodimer. Heterodimer of an alpha (TPM1, TPM3 or TPM4) and a beta (TPM2) chain.

The protein resides in the cytoplasm. It localises to the cytoskeleton. Its function is as follows. Binds to actin filaments in muscle and non-muscle cells. Plays a central role, in association with the troponin complex, in the calcium dependent regulation of vertebrate striated muscle contraction. Smooth muscle contraction is regulated by interaction with caldesmon. In non-muscle cells is implicated in stabilizing cytoskeleton actin filaments. This chain is Tropomyosin alpha-1 chain (tpm1), found in Xenopus laevis (African clawed frog).